A 397-amino-acid chain; its full sequence is AIAAIIIFLILFTIFGNALVILAVLTSRSLRAPQNLFLVSLAAADILVATLIIPFSLANELLGYWYFRRMWCKVYLALDVLFCTSSIVHLCAISLDRYWAVSRALEYNSKRTPRRIKCIILMVWLIAAVISLPSLVYKGDQGPQPSGAPQCNLNQETWYILASSIGSFFAPCLIMILVYLRIYLIAKRSHCRGPRAKGAPGKSKFKQSRQVPGGTLASAKVPNLAAHLVAAGETNGRSKPTGEKEMGETPEDSGTSTLPPSWPALPNSGQDQKEGICEASLEEEAEEEEEGEEEREEECEPQALPASPASACSPPLQQPQGSQVLATLRGQVLLGRAAGAASGQWWRRRTQLSREKRFTFVLAVVIGVFVLCWFPFFFSYSLGAICPQQCKVPHDLF.

The chain crosses the membrane as a helical span at residues 1 to 25 (AIAAIIIFLILFTIFGNALVILAVL). Topologically, residues 26–36 (TSRSLRAPQNL) are cytoplasmic. Residues 37–62 (FLVSLAAADILVATLIIPFSLANELL) traverse the membrane as a helical segment. The Extracellular segment spans residues 63–72 (GYWYFRRMWC). Residues Cys72 and Cys151 are joined by a disulfide bond. The helical transmembrane segment at 73-95 (KVYLALDVLFCTSSIVHLCAISL) threads the bilayer. Residues 96 to 117 (DRYWAVSRALEYNSKRTPRRIK) lie on the Cytoplasmic side of the membrane. A helical transmembrane segment spans residues 118–140 (CIILMVWLIAAVISLPSLVYKGD). Over 141-156 (QGPQPSGAPQCNLNQE) the chain is Extracellular. The helical transmembrane segment at 157–180 (TWYILASSIGSFFAPCLIMILVYL) threads the bilayer. Topologically, residues 181 to 361 (RIYLIAKRSH…LSREKRFTFV (181 aa)) are cytoplasmic. Disordered regions lie at residues 193–212 (GPRA…RQVP) and 230–319 (AAGE…LQQP). The span at 280–300 (SLEEEAEEEEEGEEEREEECE) shows a compositional bias: acidic residues. Over residues 301-319 (PQALPASPASACSPPLQQP) the composition is skewed to low complexity. The chain crosses the membrane as a helical span at residues 362–385 (LAVVIGVFVLCWFPFFFSYSLGAI). Residues 386–394 (CPQQCKVPH) are Extracellular-facing. The chain crosses the membrane as a helical span at residues 395–397 (DLF).

This sequence belongs to the G-protein coupled receptor 1 family. Adrenergic receptor subfamily. ADRA2B sub-subfamily. In terms of assembly, interacts with RAB26. Interacts with PPP1R9B.

It localises to the cell membrane. Functionally, alpha-2 adrenergic receptors mediate the catecholamine-induced inhibition of adenylate cyclase through the action of G proteins. This is Alpha-2B adrenergic receptor (ADRA2B) from Talpa europaea (European mole).